The chain runs to 894 residues: Valine--tRNA ligase (894 aa).

Positions 48 to 58 match the 'HIGH' region motif; the sequence is PNVTGFLHMGH. The short motif at 527-531 is the 'KMSKS' region element; sequence KMSKS. Residue K530 participates in ATP binding. Positions 827–852 form a coiled coil; that stretch reads LVDFDEEVKRINKSIEKLTRDIGMLS.

The protein belongs to the class-I aminoacyl-tRNA synthetase family. ValS type 1 subfamily. Monomer.

Its subcellular location is the cytoplasm. The catalysed reaction is tRNA(Val) + L-valine + ATP = L-valyl-tRNA(Val) + AMP + diphosphate. Catalyzes the attachment of valine to tRNA(Val). As ValRS can inadvertently accommodate and process structurally similar amino acids such as threonine, to avoid such errors, it has a 'posttransfer' editing activity that hydrolyzes mischarged Thr-tRNA(Val) in a tRNA-dependent manner. This Bdellovibrio bacteriovorus (strain ATCC 15356 / DSM 50701 / NCIMB 9529 / HD100) protein is Valine--tRNA ligase.